Consider the following 291-residue polypeptide: ATP synthase gamma chain (291 aa).

This sequence belongs to the ATPase gamma chain family. F-type ATPases have 2 components, CF(1) - the catalytic core - and CF(0) - the membrane proton channel. CF(1) has five subunits: alpha(3), beta(3), gamma(1), delta(1), epsilon(1). CF(0) has three main subunits: a, b and c.

The protein resides in the cell inner membrane. Produces ATP from ADP in the presence of a proton gradient across the membrane. The gamma chain is believed to be important in regulating ATPase activity and the flow of protons through the CF(0) complex. This Burkholderia pseudomallei (strain 1106a) protein is ATP synthase gamma chain.